The sequence spans 207 residues: Homeobox protein BarH-like 1 (207 aa).

The segment at residues 95–154 (GRRSRTVFTELQLMGLEKRFEKQKYLSTPDRIDLAESLGLSQLQVKTWYQNRRMKWKKIV) is a DNA-binding region (homeobox). Positions 157–207 (GGGLESPTKPKGRPKKNSIPSSEQLSEQERAKETEKPPESPGEPSERQQEE) are disordered. Residues 183-207 (EQERAKETEKPPESPGEPSERQQEE) show a composition bias toward basic and acidic residues.

Belongs to the BAR homeobox family. Expressed predominantly in the facial primordia, developing stomach, and proximal limbs.

It localises to the nucleus. Its function is as follows. Transcription factor, which is involved in craniofacial development, in odontogenic region definition, and in stomach organogenesis. Binds to a regulatory module of the NCAM promoter. The polypeptide is Homeobox protein BarH-like 1 (BARX1) (Gallus gallus (Chicken)).